The following is a 271-amino-acid chain: Zinc finger protein 501 (271 aa).

9 C2H2-type zinc fingers span residues Ser22–His44, Tyr50–His72, Tyr78–His100, Tyr106–His128, Tyr134–His156, Phe162–His184, Tyr190–His212, Tyr218–His240, and Tyr246–His268.

This sequence belongs to the krueppel C2H2-type zinc-finger protein family.

The protein resides in the nucleus. It is found in the nucleolus. May be involved in transcriptional regulation. Essential for Golgi structural integrity. This Homo sapiens (Human) protein is Zinc finger protein 501 (ZNF501).